Consider the following 97-residue polypeptide: Putative pterin-4-alpha-carbinolamine dehydratase (97 aa).

This sequence belongs to the pterin-4-alpha-carbinolamine dehydratase family.

It catalyses the reaction (4aS,6R)-4a-hydroxy-L-erythro-5,6,7,8-tetrahydrobiopterin = (6R)-L-erythro-6,7-dihydrobiopterin + H2O. The chain is Putative pterin-4-alpha-carbinolamine dehydratase from Dinoroseobacter shibae (strain DSM 16493 / NCIMB 14021 / DFL 12).